Reading from the N-terminus, the 356-residue chain is Histidinol-phosphate aminotransferase (356 aa).

The residue at position 214 (lysine 214) is an N6-(pyridoxal phosphate)lysine.

It belongs to the class-II pyridoxal-phosphate-dependent aminotransferase family. Histidinol-phosphate aminotransferase subfamily. As to quaternary structure, homodimer. It depends on pyridoxal 5'-phosphate as a cofactor.

It carries out the reaction L-histidinol phosphate + 2-oxoglutarate = 3-(imidazol-4-yl)-2-oxopropyl phosphate + L-glutamate. It functions in the pathway amino-acid biosynthesis; L-histidine biosynthesis; L-histidine from 5-phospho-alpha-D-ribose 1-diphosphate: step 7/9. In Shigella boydii serotype 18 (strain CDC 3083-94 / BS512), this protein is Histidinol-phosphate aminotransferase.